The sequence spans 205 residues: ATP-dependent Clp protease proteolytic subunit (205 aa).

Ser-101 (nucleophile) is an active-site residue. Residue His-126 is part of the active site.

It belongs to the peptidase S14 family. In terms of assembly, component of the chloroplastic Clp protease core complex.

Its subcellular location is the plastid. It localises to the chloroplast stroma. It catalyses the reaction Hydrolysis of proteins to small peptides in the presence of ATP and magnesium. alpha-casein is the usual test substrate. In the absence of ATP, only oligopeptides shorter than five residues are hydrolyzed (such as succinyl-Leu-Tyr-|-NHMec, and Leu-Tyr-Leu-|-Tyr-Trp, in which cleavage of the -Tyr-|-Leu- and -Tyr-|-Trp bonds also occurs).. Functionally, cleaves peptides in various proteins in a process that requires ATP hydrolysis. Has a chymotrypsin-like activity. Plays a major role in the degradation of misfolded proteins. The polypeptide is ATP-dependent Clp protease proteolytic subunit (Pinus contorta (Shore pine)).